We begin with the raw amino-acid sequence, 144 residues long: Deoxyuridine 5'-triphosphate nucleotidohydrolase (144 aa).

Substrate contacts are provided by residues 63-65 (RSG), N76, and 80-82 (TID).

Belongs to the dUTPase family. Mg(2+) is required as a cofactor.

It carries out the reaction dUTP + H2O = dUMP + diphosphate + H(+). It participates in pyrimidine metabolism; dUMP biosynthesis; dUMP from dCTP (dUTP route): step 2/2. This enzyme is involved in nucleotide metabolism: it produces dUMP, the immediate precursor of thymidine nucleotides and it decreases the intracellular concentration of dUTP so that uracil cannot be incorporated into DNA. The protein is Deoxyuridine 5'-triphosphate nucleotidohydrolase of Porphyromonas gingivalis (strain ATCC BAA-308 / W83).